The sequence spans 208 residues: Uracil phosphoribosyltransferase (208 aa).

5-phospho-alpha-D-ribose 1-diphosphate contacts are provided by residues Arg78, Arg103, and 130-138; that span reads DPMLATGGS. Uracil-binding positions include Ile193 and 198 to 200; that span reads GDA. Residue Asp199 coordinates 5-phospho-alpha-D-ribose 1-diphosphate.

The protein belongs to the UPRTase family. The cofactor is Mg(2+).

The enzyme catalyses UMP + diphosphate = 5-phospho-alpha-D-ribose 1-diphosphate + uracil. Its pathway is pyrimidine metabolism; UMP biosynthesis via salvage pathway; UMP from uracil: step 1/1. With respect to regulation, allosterically activated by GTP. Its function is as follows. Catalyzes the conversion of uracil and 5-phospho-alpha-D-ribose 1-diphosphate (PRPP) to UMP and diphosphate. The protein is Uracil phosphoribosyltransferase of Wolinella succinogenes (strain ATCC 29543 / DSM 1740 / CCUG 13145 / JCM 31913 / LMG 7466 / NCTC 11488 / FDC 602W) (Vibrio succinogenes).